Here is a 63-residue protein sequence, read N- to C-terminus: Large ribosomal subunit protein uL29 (63 aa).

The protein belongs to the universal ribosomal protein uL29 family.

The sequence is that of Large ribosomal subunit protein uL29 from Alcanivorax borkumensis (strain ATCC 700651 / DSM 11573 / NCIMB 13689 / SK2).